The sequence spans 168 residues: Profilin-3 (168 aa).

A disordered region spans residues 14–36 (LSLEHSDKPQRRSRAKVKKKKKT). Basic residues predominate over residues 24–36 (RRSRAKVKKKKKT).

Belongs to the profilin family. As to quaternary structure, occurs in many kinds of cells as a complex with monomeric actin in a 1:1 ratio. Binding to the poly-proline motif of formins induces formation of oligomers through the N-terminal hydrophobic residues of PRF3. Expressed in roots, rosette leaves, cauline leaves, stems and flowers.

The protein resides in the cytoplasm. The protein localises to the cytoskeleton. Its function is as follows. Binds to actin monomers and regulates the organization of the actin cytoskeleton. Can increase the critical concentration (Cc) of actin assembly in vitro. Acts as a downstream effector of the hydrogen sulfide signaling to regulate the assembly and depolymerization of F-actin. At high concentrations, profilin prevents the polymerization of actin, whereas it enhances it at low concentrations. Binding to the poly-proline motif of formin induces oligomerization of PRF3. PRF3 oligomers inhibit formin-mediated actin assembly to modulate plant immunity triggered by pathogen-associated molecular patterns (PAMPs). The protein is Profilin-3 of Arabidopsis thaliana (Mouse-ear cress).